A 393-amino-acid polypeptide reads, in one-letter code: Probable acetyl-CoA acyltransferase (393 aa).

C88 functions as the Acyl-thioester intermediate in the catalytic mechanism. Residues H349 and C378 each act as proton acceptor in the active site.

It belongs to the thiolase-like superfamily. Thiolase family.

The protein localises to the cytoplasm. The catalysed reaction is 2 acetyl-CoA = acetoacetyl-CoA + CoA. This is Probable acetyl-CoA acyltransferase from Staphylococcus aureus (strain NCTC 8325 / PS 47).